The chain runs to 549 residues: ATP synthase subunit alpha (549 aa).

An ATP-binding site is contributed by 172 to 179 (GDRKTGKT). A disordered region spans residues 513 to 549 (SSTGESVVPDEHVEAMDEEDLGKESVKVKKPAPQKKK). The span at 540–549 (VKKPAPQKKK) shows a compositional bias: basic residues.

Belongs to the ATPase alpha/beta chains family. F-type ATPases have 2 components, CF(1) - the catalytic core - and CF(0) - the membrane proton channel. CF(1) has five subunits: alpha(3), beta(3), gamma(1), delta(1), epsilon(1). CF(0) has three main subunits: a(1), b(2) and c(9-12). The alpha and beta chains form an alternating ring which encloses part of the gamma chain. CF(1) is attached to CF(0) by a central stalk formed by the gamma and epsilon chains, while a peripheral stalk is formed by the delta and b chains.

Its subcellular location is the cell membrane. It carries out the reaction ATP + H2O + 4 H(+)(in) = ADP + phosphate + 5 H(+)(out). Produces ATP from ADP in the presence of a proton gradient across the membrane. The alpha chain is a regulatory subunit. The sequence is that of ATP synthase subunit alpha from Mycobacterium ulcerans (strain Agy99).